A 726-amino-acid chain; its full sequence is Catalase-peroxidase (726 aa).

Residues 1–13 show a composition bias toward polar residues; the sequence is MSMSEETNNSLSS. Positions 1–34 are disordered; sequence MSMSEETNNSLSSGKCPFHHGGSDQSAGEGTGSR. Positions 105–226 form a cross-link, tryptophyl-tyrosyl-methioninium (Trp-Tyr) (with M-252); it reads WHGAGTYRSV…LAATEMGLIY (122 aa). His106 serves as the catalytic Proton acceptor. A cross-link (tryptophyl-tyrosyl-methioninium (Tyr-Met) (with W-105)) is located at residues 226-252; that stretch reads YVNPEGPNASGEPLSAAAAIRATFGNM. His267 is a heme b binding site.

Belongs to the peroxidase family. Peroxidase/catalase subfamily. As to quaternary structure, homodimer or homotetramer. Requires heme b as cofactor. Post-translationally, formation of the three residue Trp-Tyr-Met cross-link is important for the catalase, but not the peroxidase activity of the enzyme.

The catalysed reaction is H2O2 + AH2 = A + 2 H2O. It catalyses the reaction 2 H2O2 = O2 + 2 H2O. Bifunctional enzyme with both catalase and broad-spectrum peroxidase activity. The sequence is that of Catalase-peroxidase from Enterobacter sp. (strain 638).